Reading from the N-terminus, the 449-residue chain is Heterogeneous nuclear ribonucleoprotein H2 (449 aa).

Met-1 carries the N-acetylmethionine modification. Residue Met-2 is modified to N-acetylmethionine; in Heterogeneous nuclear ribonucleoprotein H2, N-terminally processed. One can recognise an RRM 1 domain in the interval 11–90 (FVVKVRGLPW…RYVEVFKSNS (80 aa)). Ser-23 is modified (phosphoserine). Residue Lys-35 forms a Glycyl lysine isopeptide (Lys-Gly) (interchain with G-Cter in SUMO2) linkage. Phosphoserine is present on residues Ser-54 and Ser-63. Residue Lys-87 forms a Glycyl lysine isopeptide (Lys-Gly) (interchain with G-Cter in SUMO2) linkage. The residue at position 90 (Ser-90) is a Phosphoserine. Lys-98 is covalently cross-linked (Glycyl lysine isopeptide (Lys-Gly) (interchain with G-Cter in SUMO2)). An RRM 2 domain is found at 111-188 (GFVRLRGLPF…RYIEIFKSSR (78 aa)). Residue Arg-233 is modified to Dimethylated arginine; alternate. An Omega-N-methylarginine; alternate modification is found at Arg-233. The stretch at 234–249 (GAYGGGYGGYDDYGGY) is one 1-1 repeat. The tract at residues 234-433 (GAYGGGYGGY…YGGQSSMSGY (200 aa)) is 2 X 16 AA Gly-rich approximate repeats. Tyr-246 carries the post-translational modification Phosphotyrosine. Residues 289–364 (HCVHMRGLPY…RYVELFLNST (76 aa)) form the RRM 3 domain. Ser-310 carries the post-translational modification Phosphoserine. 3 consecutive repeat copies span residues 354–372 (HRYV…GGAY), 374–392 (HSYV…GGAY), and 418–433 (GGYG…MSGY). The tract at residues 354 to 392 (HRYVELFLNSTAGTSGGAYDHSYVELFLNSTAGASGGAY) is 2 X 19 AA perfect repeats.

Component of a ribonucleoprotein complex containing mRNAs and RNA-binding proteins including DDX5, HNRNPH2 and SRSF1 as well as splicing regulator ARVCF. Interacts with TXNL4/DIM1. As to expression, expressed ubiquitously.

Its subcellular location is the nucleus. It localises to the nucleoplasm. Its function is as follows. This protein is a component of the heterogeneous nuclear ribonucleoprotein (hnRNP) complexes which provide the substrate for the processing events that pre-mRNAs undergo before becoming functional, translatable mRNAs in the cytoplasm. Binds poly(RG). The protein is Heterogeneous nuclear ribonucleoprotein H2 (HNRNPH2) of Homo sapiens (Human).